The following is a 295-amino-acid chain: Protoheme IX farnesyltransferase (295 aa).

Helical transmembrane passes span 31–51 (GLVMITCAGGMWLAPGQIGAA), 54–74 (VLTVLATAVVVGAANALNCYL), 98–118 (FVALGLGIAAPAFAIPILSLA), 121–141 (GLTALLALVALLTYVLVYTPM), 147–167 (TALFVGAVPGAIPPLMGWTSV), 173–193 (AGGLALFGLLFAWQLPHFLAI), 220–240 (LWMALTTILLLPASLALVPLG), 245–265 (GYAITAAVLGLALSAYAISGI), and 273–293 (ARTFFLGTLVHLTVLFVALFL).

Belongs to the UbiA prenyltransferase family. Protoheme IX farnesyltransferase subfamily.

Its subcellular location is the cell inner membrane. The enzyme catalyses heme b + (2E,6E)-farnesyl diphosphate + H2O = Fe(II)-heme o + diphosphate. Its pathway is porphyrin-containing compound metabolism; heme O biosynthesis; heme O from protoheme: step 1/1. Its function is as follows. Converts heme B (protoheme IX) to heme O by substitution of the vinyl group on carbon 2 of heme B porphyrin ring with a hydroxyethyl farnesyl side group. This Anaeromyxobacter dehalogenans (strain 2CP-C) protein is Protoheme IX farnesyltransferase.